Here is a 333-residue protein sequence, read N- to C-terminus: Ribosomal RNA small subunit methyltransferase H (333 aa).

S-adenosyl-L-methionine contacts are provided by residues 42-44 (GGH), Asp-62, Phe-86, Asp-105, and Gln-112.

The protein belongs to the methyltransferase superfamily. RsmH family.

It is found in the cytoplasm. The enzyme catalyses cytidine(1402) in 16S rRNA + S-adenosyl-L-methionine = N(4)-methylcytidine(1402) in 16S rRNA + S-adenosyl-L-homocysteine + H(+). In terms of biological role, specifically methylates the N4 position of cytidine in position 1402 (C1402) of 16S rRNA. This chain is Ribosomal RNA small subunit methyltransferase H, found in Cupriavidus necator (strain ATCC 17699 / DSM 428 / KCTC 22496 / NCIMB 10442 / H16 / Stanier 337) (Ralstonia eutropha).